We begin with the raw amino-acid sequence, 527 residues long: Eukaryotic translation initiation factor 2 subunit gamma (527 aa).

A disordered region spans residues 1–83 (MSDLQDQEPS…GLPEQPLNPD (83 aa)). Thr-60 is modified (phosphothreonine). Residues 98–307 (QATINIGTIG…IVKTIPVPPR (210 aa)) form the tr-type G domain. Positions 107–114 (GHVAHGKS) are G1. Residue 110–115 (AHGKST) coordinates GTP. Positions 135 to 139 (NITIK) are G2. The interval 193–196 (DCPG) is G3. A GTP-binding site is contributed by 249 to 252 (NKVD). The G4 stretch occupies residues 249 to 252 (NKVD). Position 258 is a phosphoserine (Ser-258). Residue 284 to 286 (SAQ) participates in GTP binding. The G5 stretch occupies residues 284–286 (SAQ). The interval 515-527 (ATIKKGTTLEPIA) is interacts with CDC123.

This sequence belongs to the TRAFAC class translation factor GTPase superfamily. Classic translation factor GTPase family. EIF2G subfamily. In terms of assembly, eukaryotic translation initiation factor 2 eIF2 is a heterotrimeric complex composed of an alpha, a beta and a gamma subunit. The factors eIF-1, eIF-1A, eIF-2, eIF-3, TIF5/eIF-5 and methionyl-tRNAi form a multifactor complex (MFC) that may bind to the 40S ribosome. Interacts (via C-terminus) with CDC123; the interaction is direct. Interacts with GCD1. Interacts with the eIF2B complex subunits GCD6 and GCD7. Interacts with methionyl-initiator methionine tRNA.

The protein localises to the cytoplasm. It localises to the cytosol. It carries out the reaction GTP + H2O = GDP + phosphate + H(+). Functionally, as a subunit of eukaryotic initiation factor 2 eIF2, involved in the early steps of protein synthesis. In the presence of GTP, eIF-2 forms a ternary complex with initiator tRNA Met-tRNAi and then recruits the 40S ribosomal complex and initiation factors eIF-1, eIF-1A and eIF-3 to form the 43S pre-initiation complex (43S PIC), a step that determines the rate of protein translation. The 43S PIC binds to mRNA and scans downstream to the initiation codon, where it forms a 48S initiation complex by codon-anticodon base pairing. This leads to the displacement of eIF-1 to allow GTPase-activating protein (GAP) eIF-5-mediated hydrolysis of eIF2-bound GTP. Hydrolysis of GTP and release of Pi, which makes GTP hydrolysis irreversible, causes the release of the eIF-2-GDP binary complex from the 40S subunit, an event that is essential for the subsequent joining of the 60S ribosomal subunit to form an elongation-competent 80S ribosome. In order for eIF-2 to recycle and catalyze another round of initiation, the GDP bound to eIF-2 must be exchanged with GTP by way of a reaction catalyzed by GDP-GTP exchange factor (GEF) eIF-2B. The protein is Eukaryotic translation initiation factor 2 subunit gamma (GCD11) of Saccharomyces cerevisiae (strain ATCC 204508 / S288c) (Baker's yeast).